We begin with the raw amino-acid sequence, 654 residues long: DNA-directed RNA polymerase III subunit RPC3 (654 aa).

Residue T27 is modified to Phosphothreonine. Disordered stretches follow at residues 381 to 401 (LSRK…ASLP) and 422 to 448 (KSLQ…EDPH). 2 positions are modified to phosphoserine: S392 and S394. The segment covering 429–444 (DTQEEDEEEEDLDADT) has biased composition (acidic residues). The tract at residues 581 to 602 (LEWNMANLLFKKEKLKQENSTL) is leucine-zipper.

Belongs to the RNA polymerase beta chain family. In terms of assembly, component of the RNA polymerase III (Pol III) complex consisting of 17 subunits.

It is found in the cytoplasm. The protein localises to the nucleus. Functionally, DNA-dependent RNA polymerase catalyzes the transcription of DNA into RNA using the four ribonucleoside triphosphates as substrates. Specific core component of RNA polymerase III which synthesizes small RNAs, such as 5S rRNA and tRNAs. The protein is DNA-directed RNA polymerase III subunit RPC3 (RPC82) of Saccharomyces cerevisiae (strain YJM789) (Baker's yeast).